Reading from the N-terminus, the 104-residue chain is Intracellular chorismate mutase (104 aa).

Positions 23–104 (AVPEIDDLRR…LRLGRGRLGY (82 aa)) constitute a Chorismate mutase domain. Chorismate is bound by residues arginine 59, valine 68, and glutamate 72.

Homodimer. Probably interacts with AroG (MSMEG_4244).

It is found in the cytoplasm. The enzyme catalyses chorismate = prephenate. It participates in metabolic intermediate biosynthesis; prephenate biosynthesis; prephenate from chorismate: step 1/1. Its activity is regulated as follows. The formation of the complex with AroG activates the chorismate mutase activity. Functionally, catalyzes the Claisen rearrangement of chorismate to prephenate. Probably involved in the aromatic amino acid biosynthesis. This is Intracellular chorismate mutase from Mycolicibacterium smegmatis (strain ATCC 700084 / mc(2)155) (Mycobacterium smegmatis).